Consider the following 460-residue polypeptide: Cyclin-T1-2 (460 aa).

2 disordered regions span residues 1–20 (MDEA…SSVA) and 285–345 (QPIS…QDHS). A compositionally biased stretch (basic and acidic residues) spans 314–324 (SDDHSVHDGSR). Polar residues predominate over residues 332–345 (NSESEAQKNLQDHS).

It belongs to the cyclin family. Cyclin T subfamily.

The chain is Cyclin-T1-2 (CYCT1-2) from Arabidopsis thaliana (Mouse-ear cress).